Consider the following 84-residue polypeptide: uncharacterized protein (84 aa).

This is an uncharacterized protein from Helicobacter pylori (strain ATCC 700392 / 26695) (Campylobacter pylori).